Consider the following 633-residue polypeptide: Chaperone protein dnaK2 (633 aa).

Thr197 bears the Phosphothreonine; by autocatalysis mark. Residues 600-633 (SNAASQAADGTSSESNNSTEGNDDVIDAEFTESK) are disordered. Low complexity predominate over residues 608 to 619 (DGTSSESNNSTE). The span at 620–633 (GNDDVIDAEFTESK) shows a compositional bias: acidic residues.

The protein belongs to the heat shock protein 70 family.

In terms of biological role, acts as a chaperone. The protein is Chaperone protein dnaK2 (dnaK2) of Prochlorococcus marinus (strain SARG / CCMP1375 / SS120).